Here is a 420-residue protein sequence, read N- to C-terminus: ATP-dependent Clp protease ATP-binding subunit ClpX (420 aa).

Positions 4–57 (KTPGNNGKQKLFCSFCGKEQDAVKRLVAGPGVYICDECISLCNEIIAEDHEHSH) constitute a ClpX-type ZB domain. 4 residues coordinate Zn(2+): Cys-16, Cys-19, Cys-38, and Cys-41. Position 122–129 (122–129 (PTGSGKTL)) interacts with ATP.

Belongs to the ClpX chaperone family. In terms of assembly, component of the ClpX-ClpP complex. Forms a hexameric ring that, in the presence of ATP, binds to fourteen ClpP subunits assembled into a disk-like structure with a central cavity, resembling the structure of eukaryotic proteasomes.

Functionally, ATP-dependent specificity component of the Clp protease. It directs the protease to specific substrates. Can perform chaperone functions in the absence of ClpP. This chain is ATP-dependent Clp protease ATP-binding subunit ClpX, found in Leptospira interrogans serogroup Icterohaemorrhagiae serovar copenhageni (strain Fiocruz L1-130).